The following is a 502-amino-acid chain: NAD(P)H-quinone oxidoreductase chain 4, chloroplastic (502 aa).

The next 14 membrane-spanning stretches (helical) occupy residues 4 to 24 (FPWL…IFFL), 37 to 57 (ISIC…HFQL), 87 to 107 (LGSI…AWPV), 113 to 130 (LFYF…GLFS), 134 to 154 (LLLF…LLSM), 167 to 187 (FILY…GMGL), 213 to 233 (ILLY…IPLH), 244 to 264 (HYST…YGLI), 274 to 294 (AHYL…IYAA), 315 to 335 (MGFI…GAIL), 336 to 356 (QILS…TASD), 388 to 408 (LALP…GLIT), 419 to 439 (LITF…LSML), and 464 to 484 (LFIL…PDFV).

It belongs to the complex I subunit 4 family.

It is found in the plastid. The protein localises to the chloroplast thylakoid membrane. The catalysed reaction is a plastoquinone + NADH + (n+1) H(+)(in) = a plastoquinol + NAD(+) + n H(+)(out). It catalyses the reaction a plastoquinone + NADPH + (n+1) H(+)(in) = a plastoquinol + NADP(+) + n H(+)(out). This Lolium perenne (Perennial ryegrass) protein is NAD(P)H-quinone oxidoreductase chain 4, chloroplastic.